A 442-amino-acid polypeptide reads, in one-letter code: DNA topoisomerase 6 subunit A3 (442 aa).

The disordered stretch occupies residues 1 to 34 (MSEKKRRGGAGAGAASGSASKKPRVSTAASYAES). The Topo IIA-type catalytic domain occupies 91 to 224 (QDSASVTSRI…LHVVASEKGV (134 aa)). Residue Tyr-185 is the O-(5'-phospho-DNA)-tyrosine intermediate of the active site. Residues Glu-271 and Asp-323 each contribute to the Mg(2+) site.

Belongs to the TOP6A family. In terms of assembly, homodimer. Heterotetramer of two TOP6A and two TOP6B subunits. Interacts with TOP6B. The cofactor is Mg(2+). Highly expressed in flowers before pollination. Expressed in roots and shoots.

Its subcellular location is the nucleus. It catalyses the reaction ATP-dependent breakage, passage and rejoining of double-stranded DNA.. Its function is as follows. Component of the DNA topoisomerase VI involved in chromatin organization and progression of endoreduplication cycles. Relaxes both positive and negative superturns and exhibits a strong decatenase activity. May be involved in cell proliferation and stress tolerance. The chain is DNA topoisomerase 6 subunit A3 from Oryza sativa subsp. indica (Rice).